The following is a 355-amino-acid chain: tRNA pseudouridine synthase D (355 aa).

Asp84 serves as the catalytic Nucleophile. Residues 160–306 form the TRUD domain; sequence GVPNYFGLQR…MAHERRILRL (147 aa).

The protein belongs to the pseudouridine synthase TruD family.

The catalysed reaction is uridine(13) in tRNA = pseudouridine(13) in tRNA. Responsible for synthesis of pseudouridine from uracil-13 in transfer RNAs. This Pseudomonas aeruginosa (strain ATCC 15692 / DSM 22644 / CIP 104116 / JCM 14847 / LMG 12228 / 1C / PRS 101 / PAO1) protein is tRNA pseudouridine synthase D.